A 206-amino-acid polypeptide reads, in one-letter code: RNA pyrophosphohydrolase (206 aa).

Positions 6–149 constitute a Nudix hydrolase domain; it reads GYRPNVGIVL…KRGVYARALR (144 aa). The Nudix box motif lies at 38–59; it reads GGMNTDETPVEAMYRELQEETG. The segment at 175 to 206 is disordered; it reads MPGHTAGHDRPRKRPRSRGYWPKKAQGDVPPT.

The protein belongs to the Nudix hydrolase family. RppH subfamily. The cofactor is a divalent metal cation.

In terms of biological role, accelerates the degradation of transcripts by removing pyrophosphate from the 5'-end of triphosphorylated RNA, leading to a more labile monophosphorylated state that can stimulate subsequent ribonuclease cleavage. In Stenotrophomonas maltophilia (strain R551-3), this protein is RNA pyrophosphohydrolase.